We begin with the raw amino-acid sequence, 188 residues long: Elongation factor P (188 aa).

K34 is modified (N6-(3,6-diaminohexanoyl)-5-hydroxylysine).

It belongs to the elongation factor P family. Post-translationally, may be beta-lysylated on the epsilon-amino group of Lys-34 by the combined action of EpmA and EpmB, and then hydroxylated on the C5 position of the same residue by EpmC (if this protein is present). Lysylation is critical for the stimulatory effect of EF-P on peptide-bond formation. The lysylation moiety may extend toward the peptidyltransferase center and stabilize the terminal 3-CCA end of the tRNA. Hydroxylation of the C5 position on Lys-34 may allow additional potential stabilizing hydrogen-bond interactions with the P-tRNA.

It localises to the cytoplasm. Its pathway is protein biosynthesis; polypeptide chain elongation. Functionally, involved in peptide bond synthesis. Alleviates ribosome stalling that occurs when 3 or more consecutive Pro residues or the sequence PPG is present in a protein, possibly by augmenting the peptidyl transferase activity of the ribosome. Modification of Lys-34 is required for alleviation. This Haemophilus influenzae (strain PittGG) protein is Elongation factor P.